A 104-amino-acid polypeptide reads, in one-letter code: N(4)-acetylcytidine amidohydrolase (104 aa).

The ASCH domain occupies 6-94; sequence ITFFQRFQND…IAEIYPNQTQ (89 aa). The Proton acceptor role is filled by K21. T24 serves as the catalytic Nucleophile. E74 functions as the Proton donor in the catalytic mechanism.

It belongs to the N(4)-acetylcytidine amidohydrolase family.

It catalyses the reaction N(4)-acetylcytidine + H2O = cytidine + acetate + H(+). It carries out the reaction N(4)-acetyl-2'-deoxycytidine + H2O = 2'-deoxycytidine + acetate + H(+). The catalysed reaction is N(4)-acetylcytosine + H2O = cytosine + acetate + H(+). Catalyzes the hydrolysis of N(4)-acetylcytidine (ac4C). In Salmonella agona (strain SL483), this protein is N(4)-acetylcytidine amidohydrolase (yqfB).